We begin with the raw amino-acid sequence, 670 residues long: Segment polarity protein dishevelled homolog DVL-1 (670 aa).

The DIX domain maps to 1–85 (MAETKIIYHM…RVVSWLVLAE (85 aa)). The disordered stretch occupies residues 89 to 237 (SDAGSQGTDS…LRQADRASSF (149 aa)). Over residues 142-151 (SHRRERARRR) the composition is skewed to basic residues. Positions 152 to 171 (NREEAARTNGHPRGDRRRDV) are enriched in basic and acidic residues. Over residues 176 to 192 (DSASTALSSELESSSFV) the composition is skewed to low complexity. Ser194 carries the post-translational modification Phosphoserine. The segment covering 200–214 (TSRLSSSTEQSTSSR) has biased composition (low complexity). Residues 215-228 (LIRKHKRRRRKQRL) show a composition bias toward basic residues. The PDZ domain occupies 251–323 (TVTLNMERHH…NDDAVRVLRE (73 aa)). The 75-residue stretch at 400–474 (PDSGLEIRDR…SEQCYYVFGD (75 aa)) folds into the DEP domain. Positions 518-642 (PGPPPCFPPA…PGGPPVRELA (125 aa)) are disordered. The span at 526 to 555 (PAYQDPGFSYGSGSTGSQQSEGSKSSGSTR) shows a compositional bias: low complexity. Over residues 600 to 611 (SRGSSPRSQASA) the composition is skewed to polar residues.

This sequence belongs to the DSH family. In terms of assembly, interacts with CXXC4. Interacts (via PDZ domain) with NXN. Interacts with BRD7 and INVS. Interacts (via PDZ domain) with VANGL1 and VANGL2 (via C-terminus). Interacts with ARRB1; the interaction is enhanced by phosphorylation of DVL1. Interacts with CYLD. Interacts (via PDZ domain) with RYK. Self-associates (via DIX domain) and forms higher homooligomers. Interacts (via PDZ domain) with DACT1 and FZD7, where DACT1 and FZD7 compete for the same binding site. Interacts (via DEP domain) with MUSK; the interaction is direct and mediates the formation a DVL1, MUSK and PAK1 ternary complex involved in AChR clustering. Interacts (via PDZ domain) with TMEM88. Interacts with DCDC2. Interacts with FOXK2. Interacts with PKD1 (via extracellular domain). Interacts (via PDZ domain) with CCDC88C/DAPLE; competes with CCDC88C for binding to frizzled receptor FZD7 and dissociates from CCDC88C following initiation of non-canonical Wnt signaling when CCDC88C displaces DVL1 from ligand-activated FZD7. Ubiquitinated; undergoes both 'Lys-48'-linked ubiquitination, leading to its subsequent degradation by the ubiquitin-proteasome pathway, and 'Lys-63'-linked ubiquitination. The interaction with INVS is required for ubiquitination. Deubiquitinated by CYLD, which acts on 'Lys-63'-linked ubiquitin chains.

The protein localises to the cell membrane. It localises to the cytoplasm. Its subcellular location is the cytosol. The protein resides in the cytoplasmic vesicle. Participates in Wnt signaling by binding to the cytoplasmic C-terminus of frizzled family members and transducing the Wnt signal to down-stream effectors. Plays a role both in canonical and non-canonical Wnt signaling. Plays a role in the signal transduction pathways mediated by multiple Wnt genes. Required for LEF1 activation upon WNT1 and WNT3A signaling. DVL1 and PAK1 form a ternary complex with MUSK which is important for MUSK-dependent regulation of AChR clustering during the formation of the neuromuscular junction (NMJ). This Pan troglodytes (Chimpanzee) protein is Segment polarity protein dishevelled homolog DVL-1 (DVL1).